The sequence spans 126 residues: Large ribosomal subunit protein bL20 (126 aa).

A compositionally biased stretch (basic residues) spans 1 to 15 (MARVKRAVNAQKKRR). A disordered region spans residues 1 to 20 (MARVKRAVNAQKKRRTTLER).

This sequence belongs to the bacterial ribosomal protein bL20 family.

Functionally, binds directly to 23S ribosomal RNA and is necessary for the in vitro assembly process of the 50S ribosomal subunit. It is not involved in the protein synthesizing functions of that subunit. In Beutenbergia cavernae (strain ATCC BAA-8 / DSM 12333 / CCUG 43141 / JCM 11478 / NBRC 16432 / NCIMB 13614 / HKI 0122), this protein is Large ribosomal subunit protein bL20.